We begin with the raw amino-acid sequence, 161 residues long: Nucleotide-binding protein Shal_3198 (161 aa).

This sequence belongs to the YajQ family.

Its function is as follows. Nucleotide-binding protein. The chain is Nucleotide-binding protein Shal_3198 from Shewanella halifaxensis (strain HAW-EB4).